The sequence spans 323 residues: Beta-ketoacyl-[acyl-carrier-protein] synthase III (323 aa).

Residues C114 and H250 contribute to the active site. The segment at 251–255 (QANIR) is ACP-binding. N280 is an active-site residue.

The protein belongs to the thiolase-like superfamily. FabH family. As to quaternary structure, homodimer.

It localises to the cytoplasm. The enzyme catalyses malonyl-[ACP] + acetyl-CoA + H(+) = 3-oxobutanoyl-[ACP] + CO2 + CoA. It functions in the pathway lipid metabolism; fatty acid biosynthesis. In terms of biological role, catalyzes the condensation reaction of fatty acid synthesis by the addition to an acyl acceptor of two carbons from malonyl-ACP. Catalyzes the first condensation reaction which initiates fatty acid synthesis and may therefore play a role in governing the total rate of fatty acid production. Possesses both acetoacetyl-ACP synthase and acetyl transacylase activities. Its substrate specificity determines the biosynthesis of branched-chain and/or straight-chain of fatty acids. The chain is Beta-ketoacyl-[acyl-carrier-protein] synthase III from Roseobacter denitrificans (strain ATCC 33942 / OCh 114) (Erythrobacter sp. (strain OCh 114)).